The following is a 205-amino-acid chain: Ribosomal RNA small subunit methyltransferase G (205 aa).

S-adenosyl-L-methionine-binding positions include Gly-73, Leu-78, 124–125 (VE), and Arg-138.

The protein belongs to the methyltransferase superfamily. RNA methyltransferase RsmG family.

It localises to the cytoplasm. It catalyses the reaction guanosine(527) in 16S rRNA + S-adenosyl-L-methionine = N(7)-methylguanosine(527) in 16S rRNA + S-adenosyl-L-homocysteine. Its function is as follows. Specifically methylates the N7 position of guanine in position 527 of 16S rRNA. The chain is Ribosomal RNA small subunit methyltransferase G from Actinobacillus pleuropneumoniae serotype 5b (strain L20).